A 102-amino-acid polypeptide reads, in one-letter code: Aspartyl/glutamyl-tRNA(Asn/Gln) amidotransferase subunit C (102 aa).

Belongs to the GatC family. As to quaternary structure, heterotrimer of A, B and C subunits.

The catalysed reaction is L-glutamyl-tRNA(Gln) + L-glutamine + ATP + H2O = L-glutaminyl-tRNA(Gln) + L-glutamate + ADP + phosphate + H(+). It carries out the reaction L-aspartyl-tRNA(Asn) + L-glutamine + ATP + H2O = L-asparaginyl-tRNA(Asn) + L-glutamate + ADP + phosphate + 2 H(+). In terms of biological role, allows the formation of correctly charged Asn-tRNA(Asn) or Gln-tRNA(Gln) through the transamidation of misacylated Asp-tRNA(Asn) or Glu-tRNA(Gln) in organisms which lack either or both of asparaginyl-tRNA or glutaminyl-tRNA synthetases. The reaction takes place in the presence of glutamine and ATP through an activated phospho-Asp-tRNA(Asn) or phospho-Glu-tRNA(Gln). The chain is Aspartyl/glutamyl-tRNA(Asn/Gln) amidotransferase subunit C from Bordetella pertussis (strain Tohama I / ATCC BAA-589 / NCTC 13251).